The following is a 126-amino-acid chain: uncharacterized protein (126 aa).

This is an uncharacterized protein from Agrobacterium tumefaciens (strain 15955).